The primary structure comprises 425 residues: Glyco-Gag protein (425 aa).

Residues 1 to 54 are Cytoplasmic-facing; sequence MSRASSGTATGARLFGISSVLGEYRVLIGDEGAGPSRSPSEVSFSVWYRSRAAR. Residues 55–75 form a helical membrane-spanning segment; that stretch reads LVIVCLVASFLVPCLTFLIAE. The Extracellular portion of the chain corresponds to 76 to 425; it reads TVMGQTITTP…VVQGKEETPA (350 aa). A glycan (N-linked (GlcNAc...) asparagine; by host) is linked at asparagine 137. A disordered region spans residues 174 to 285; that stretch reads VRPFLPPPKP…LREGPNNRPQ (112 aa). The segment covering 177 to 196 has biased composition (pro residues); it reads FLPPPKPPTSLPQPLSPQPS. Over residues 197–209 the composition is skewed to low complexity; it reads APLTSSLYPVLPK. Pro residues-rich tracts occupy residues 213 to 223 and 233 to 248; these read PKPPVLPPDPS and EPPP…PSGP.

Glycosylated by host. In terms of processing, cleaved by host near the middle of the molecule, releasing the c-terminal half containing capsid and nucleoprotein domains op GAG.

Its subcellular location is the host cell membrane. Plays a role in viral particle release. Presumably acts by facilitating the fission of the virion bud at the cell surface. The protein is Glyco-Gag protein of Felidae (cat family).